The chain runs to 87 residues: MFTVIFGRPGCPYCVRAKELAEKLSKERDDFNYRYIDIHAEGITKADLEKTVGKPVETVPQIFVDQKHIGGCTDFEAWAKENLNLFA.

The Glutaredoxin domain occupies 1–87 (MFTVIFGRPG…WAKENLNLFA (87 aa)). The cysteines at positions 11 and 14 are disulfide-linked.

Belongs to the glutaredoxin family. As to quaternary structure, monomer.

Functionally, the disulfide bond functions as an electron carrier in the glutathione-dependent synthesis of deoxyribonucleotides by the enzyme ribonucleotide reductase. In addition, it is also involved in reducing some disulfides in a coupled system with glutathione reductase. The chain is Glutaredoxin 1 (grxA) from Salmonella typhi.